Here is a 385-residue protein sequence, read N- to C-terminus: 1-deoxy-D-xylulose 5-phosphate reductoisomerase (385 aa).

Residues Thr-10, Gly-11, Ser-12, Ile-13, Gly-36, Asn-38, and Asn-121 each coordinate NADPH. Residue Lys-122 coordinates 1-deoxy-D-xylulose 5-phosphate. Residue Glu-123 coordinates NADPH. Asp-147 is a binding site for Mn(2+). Ser-148, Glu-149, Ser-173, and His-196 together coordinate 1-deoxy-D-xylulose 5-phosphate. Glu-149 contributes to the Mn(2+) binding site. An NADPH-binding site is contributed by Gly-202. Positions 209, 214, 215, and 218 each coordinate 1-deoxy-D-xylulose 5-phosphate. Residue Glu-218 coordinates Mn(2+).

Belongs to the DXR family. The cofactor is Mg(2+). Requires Mn(2+) as cofactor.

The catalysed reaction is 2-C-methyl-D-erythritol 4-phosphate + NADP(+) = 1-deoxy-D-xylulose 5-phosphate + NADPH + H(+). The protein operates within isoprenoid biosynthesis; isopentenyl diphosphate biosynthesis via DXP pathway; isopentenyl diphosphate from 1-deoxy-D-xylulose 5-phosphate: step 1/6. Functionally, catalyzes the NADPH-dependent rearrangement and reduction of 1-deoxy-D-xylulose-5-phosphate (DXP) to 2-C-methyl-D-erythritol 4-phosphate (MEP). The chain is 1-deoxy-D-xylulose 5-phosphate reductoisomerase from Exiguobacterium sp. (strain ATCC BAA-1283 / AT1b).